We begin with the raw amino-acid sequence, 377 residues long: GTPase Obg (377 aa).

Residues 1-159 enclose the Obg domain; it reads MKFVDEATIE…RRLRMELKVL (159 aa). Positions 127 to 148 are disordered; it reads NIHFKSSTNRAPRQWTPGKEGE. The OBG-type G domain maps to 160-336; that stretch reads ADVGLLGLPN…LIWALQDYLD (177 aa). GTP is bound by residues 166-173, 191-195, 213-216, 288-291, and 317-319; these read GLPNAGKS, FTTLH, DIPG, NKLD, and SGL. Residues Ser173 and Thr193 each contribute to the Mg(2+) site. A disordered region spans residues 339 to 377; sequence KRKDQDAQDQADGTYVFEDPRFDASRGGAAPATPPGGDE.

This sequence belongs to the TRAFAC class OBG-HflX-like GTPase superfamily. OBG GTPase family. Monomer. Mg(2+) serves as cofactor.

The protein localises to the cytoplasm. An essential GTPase which binds GTP, GDP and possibly (p)ppGpp with moderate affinity, with high nucleotide exchange rates and a fairly low GTP hydrolysis rate. Plays a role in control of the cell cycle, stress response, ribosome biogenesis and in those bacteria that undergo differentiation, in morphogenesis control. This is GTPase Obg from Bordetella bronchiseptica (strain ATCC BAA-588 / NCTC 13252 / RB50) (Alcaligenes bronchisepticus).